A 182-amino-acid polypeptide reads, in one-letter code: UPF0397 protein BA_2640/GBAA_2640/BAS2460 (182 aa).

5 helical membrane-spanning segments follow: residues 9-29 (VVAI…GFSI), 40-60 (AILT…IGLI), 71-91 (WSIW…MGFI), 114-134 (ITGL…DIIV), and 142-162 (IVIQ…VLGL).

This sequence belongs to the UPF0397 family.

The protein localises to the cell membrane. This chain is UPF0397 protein BA_2640/GBAA_2640/BAS2460, found in Bacillus anthracis.